A 172-amino-acid chain; its full sequence is Nucleoside-triphosphatase THEP1 (172 aa).

ATP-binding positions include 11–18 (GKPGIGKT) and 101–108 (IILIDEIG).

The protein belongs to the THEP1 NTPase family.

The enzyme catalyses a ribonucleoside 5'-triphosphate + H2O = a ribonucleoside 5'-diphosphate + phosphate + H(+). Its function is as follows. Has nucleotide phosphatase activity towards ATP, GTP, CTP, TTP and UTP. May hydrolyze nucleoside diphosphates with lower efficiency. This is Nucleoside-triphosphatase THEP1 from Sulfolobus acidocaldarius (strain ATCC 33909 / DSM 639 / JCM 8929 / NBRC 15157 / NCIMB 11770).